The sequence spans 1243 residues: Zinc finger protein ZFAT (1243 aa).

The C2H2-type 1 zinc finger occupies 12–35 (FMCKCCNLFSPNQSELLSHVSEKH). Disordered regions lie at residues 51–116 (PLST…PSSL) and 147–189 (GEAG…GKEA). Over residues 70–81 (MKRKRGRPKGST) the composition is skewed to basic residues. The C2H2-type 2; degenerate zinc finger occupies 116-141 (LECSKCCRKFSNTRQLRKHICIIVLN). A compositionally biased stretch (basic and acidic residues) spans 156–189 (ELEKKCKEDDREKASKRPRSQKTEKVQKISGKEA). C2H2-type zinc fingers lie at residues 271-293 (FTCE…LRIH), 299-321 (YKCP…LRKH), 326-349 (FACD…ERVH), 354-377 (QHCR…RDAH), 404-426 (YDCH…MLVH), 432-454 (FACE…VRKH), and 458-481 (YVCA…KEVH). Zn(2+) is bound by residues Cys273, Cys276, His289, His293, Cys301, Cys304, His317, His321, Cys328, Cys331, His344, His349, Cys356, Cys359, His372, His377, Cys406, Cys409, His422, and His426. Zn(2+)-binding residues include Cys460, Cys463, His476, and His481. 3 disordered regions span residues 534–570 (EACP…AEST), 603–625 (TSSA…SSVQ), and 638–705 (AQSA…CKAA). The segment covering 610–620 (AAPEKPPDMQH) has biased composition (basic and acidic residues). Positions 638–650 (AQSAGSDQESHGA) are enriched in polar residues. C2H2-type zinc fingers lie at residues 742–764 (LECE…VRTH), 770–793 (YYCS…IQKH), 798–822 (LKCP…LKVH), 830–853 (YSCP…KTNH), 880–903 (MKCP…IWAH), 909–931 (FKCS…MNRH), 937–959 (HLCD…KLLH), 966–988 (FKCT…MEQH), 994–1017 (FRCA…NRKH), and 1041–1064 (LKCP…KNKH). Zn(2+) contacts are provided by Cys772, Cys775, His788, His793, Cys800, Cys805, His818, His822, Cys832, Cys835, His848, His853, Cys882, Cys885, His899, His903, Cys911, Cys914, His927, His931, Cys939, Cys942, His955, and Leu958.

Isoform 1 is strongly expressed in placenta, spleen, kidney, testis and peripheral blood leukocytes. Expressed in CD4+ and CD8+ T-cells, CD19+ B-cells and CB14+ monocytes. Isoform 3 is strongly expressed in placenta, ovary, tonsil, CD19+ B-cells and CD14+ monocytes.

The protein localises to the nucleus. Its subcellular location is the cytoplasm. The protein resides in the cytosol. In terms of biological role, may be involved in transcriptional regulation. Overexpression causes down-regulation of a number of genes involved in the immune response. Some genes are also up-regulated. The chain is Zinc finger protein ZFAT (ZFAT) from Homo sapiens (Human).